Here is a 424-residue protein sequence, read N- to C-terminus: Serpin A11 (424 aa).

Residues 1-21 (MGPVWLWLWLLVAEVLLPVHC) form the signal peptide. N-linked (GlcNAc...) asparagine glycans are attached at residues Asn-108, Asn-171, Asn-352, and Asn-387.

It belongs to the serpin family.

The protein localises to the secreted. The sequence is that of Serpin A11 (Serpina11) from Mus musculus (Mouse).